The primary structure comprises 407 residues: Aurofusarin biosynthesis cluster protein S (407 aa).

The first 35 residues, 1 to 35, serve as a signal peptide directing secretion; the sequence is MSKQKPSLWRALRALSFIISIPLLIQYLVLKWYST. N-linked (GlcNAc...) asparagine glycosylation is found at asparagine 52, asparagine 174, asparagine 196, asparagine 274, and asparagine 312. 2 consecutive FAS1 domains span residues 52–192 and 195–365; these read NLTV…DTVL and PNST…DSIL.

As to quaternary structure, might be part of an extracellular enzyme complex composed of GIP1, aurF, aurO and aurS.

It localises to the secreted. It is found in the extracellular space. It functions in the pathway pigment biosynthesis. Its function is as follows. Part of the gene cluster that mediates the biosynthesis of aurofusarin, a red mycelium pigment which is acting as a mycotoxin. The first step is performed by the polyketide synthase which condenses one acetyl-CoA and 6 malonyl-CoA units to form the first intermediate, the cyclic heptaketide and yellow pigment YWA1. The C2 hydroxyl group in the pyrone ring of YWA1 is probably formed during ring closure by an aldol-type cyclization reaction. The dehydratase aurZ then acts as the first tailoring enzyme in the aurofusarin biosynthetic pathway by converting YWA1 to nor-rubrofusarin. Nor-rubrofusarin is then methylated to rubrofusarin by the O-methyltransferase aurJ. Rubrofusarin is then transported across the plasma membrane by the rubrofusarin-specific pump aurT for further enzymatic processing by the extracellular complex composed of GIP1, aurF, aurO and aurS to yield aurofusarin. The sequence is that of Aurofusarin biosynthesis cluster protein S from Gibberella zeae (strain ATCC MYA-4620 / CBS 123657 / FGSC 9075 / NRRL 31084 / PH-1) (Wheat head blight fungus).